We begin with the raw amino-acid sequence, 351 residues long: Methylthioribose-1-phosphate isomerase (351 aa).

Residues 51–53 (RGA), R94, and Q199 each bind substrate. D240 serves as the catalytic Proton donor. 250 to 251 (NK) contacts substrate.

It belongs to the EIF-2B alpha/beta/delta subunits family. MtnA subfamily. Homodimer.

It carries out the reaction 5-(methylsulfanyl)-alpha-D-ribose 1-phosphate = 5-(methylsulfanyl)-D-ribulose 1-phosphate. It participates in amino-acid biosynthesis; L-methionine biosynthesis via salvage pathway; L-methionine from S-methyl-5-thio-alpha-D-ribose 1-phosphate: step 1/6. In terms of biological role, catalyzes the interconversion of methylthioribose-1-phosphate (MTR-1-P) into methylthioribulose-1-phosphate (MTRu-1-P). The polypeptide is Methylthioribose-1-phosphate isomerase (Bacillus thuringiensis (strain Al Hakam)).